A 141-amino-acid polypeptide reads, in one-letter code: Large ribosomal subunit protein uL11 (141 aa).

This sequence belongs to the universal ribosomal protein uL11 family. Part of the ribosomal stalk of the 50S ribosomal subunit. Interacts with L10 and the large rRNA to form the base of the stalk. L10 forms an elongated spine to which L12 dimers bind in a sequential fashion forming a multimeric L10(L12)X complex. In terms of processing, one or more lysine residues are methylated.

In terms of biological role, forms part of the ribosomal stalk which helps the ribosome interact with GTP-bound translation factors. The polypeptide is Large ribosomal subunit protein uL11 (Clostridium botulinum (strain Alaska E43 / Type E3)).